The sequence spans 245 residues: MNVTLLIPARYGSSRFPGKPLAPINGKPMIQHVYERASLAKGLTDIYVATDDDRIKDAVEGFGGKVVMTSAEAASGTDRIEDAITQLGLAEDDLVVNLQGDQPLIDPISIEQIISLFERHPGEFGMATLGFQITEEEELNDPKHVKLVFDNEFNALYFSRARIPFGRDTDDYPVYKHLGVYAYTRKFVQTFAKLPLGRLEDLEKLEQLRALEHGHKIKVAISAFDSPEVDTPEDIRICEARLAVD.

Belongs to the KdsB family.

Its subcellular location is the cytoplasm. It carries out the reaction 8-amino-3,8-dideoxy-alpha-D-manno-octulosonate + CTP = CMP-8-amino-3,8-dideoxy-alpha-D-manno-oct-2-ulosonate + diphosphate. It functions in the pathway bacterial outer membrane biogenesis; lipopolysaccharide biosynthesis. In terms of biological role, activates KDO8N (a required 8-carbon sugar) for incorporation into bacterial lipopolysaccharide in the Shewanella genus. In Shewanella piezotolerans (strain WP3 / JCM 13877), this protein is 8-amino-3,8-dideoxy-manno-octulosonate cytidylyltransferase.